Here is a 497-residue protein sequence, read N- to C-terminus: Cytochrome P450 71A14 (497 aa).

Residues 3–23 (MIIISLCLATILALLLLKQFL) form a helical membrane-spanning segment. Residue Cys440 coordinates heme.

It belongs to the cytochrome P450 family. The cofactor is heme.

The protein localises to the membrane. The protein is Cytochrome P450 71A14 (CYP71A14) of Arabidopsis thaliana (Mouse-ear cress).